The following is a 645-amino-acid chain: Envelope glycoprotein (645 aa).

The first 33 residues, Met-1–Val-33, serve as a signal peptide directing secretion. A receptor-binding domain (RBD) region spans residues Ser-32 to Pro-237. The Extracellular segment spans residues Gln-34–Leu-585. Asn-43 and Asn-58 each carry an N-linked (GlcNAc...) asparagine; by host glycan. 2 cysteine pairs are disulfide-bonded: Cys-113-Cys-130 and Cys-122-Cys-135. Residues Pro-259–Gly-286 are disordered. N-linked (GlcNAc...) asparagine; by host glycosylation is present at Asn-301. Intrachain disulfides connect Cys-311-Cys-314, Cys-311-Cys-538, Cys-341-Cys-395, Cys-360-Cys-372, Cys-402-Cys-415, and Cys-530-Cys-537. The CXXC motif lies at Cys-311 to Cys-314. Residues Asn-333 and Asn-340 are each glycosylated (N-linked (GlcNAc...) asparagine; by host). N-linked (GlcNAc...) asparagine; by host glycosylation is found at Asn-373 and Asn-409. Residues Val-447–Val-467 are fusion peptide. Positions Asp-490–Glu-510 form a coiled coil. The immunosuppression stretch occupies residues Leu-513–Leu-529. A CX6CC motif is present at residues Cys-530–Cys-538. A helical transmembrane segment spans residues Ile-586 to Ile-606. A lipid anchor (S-palmitoyl cysteine; by host) is attached at Cys-605. The Cytoplasmic segment spans residues Leu-607 to Glu-640. The YXXL motif; contains endocytosis signal motif lies at Tyr-630–Leu-633.

In terms of assembly, the mature envelope protein (Env) consists of a trimer of SU-TM heterodimers attached by a labile interchain disulfide bond. The activated Env consists of SU monomers and TM trimers. Post-translationally, specific enzymatic cleavages in vivo yield mature proteins. Envelope glycoproteins are synthesized as an inactive precursor that is N-glycosylated and processed likely by host cell furin or by a furin-like protease in the Golgi to yield the mature SU and TM proteins. The cleavage site between SU and TM requires the minimal sequence [KR]-X-[KR]-R. The R-peptide is released from the C-terminus of the cytoplasmic tail of the TM protein upon particle formation as a result of proteolytic cleavage by the viral protease. Cleavage of this peptide is required for TM to become fusogenic. The CXXC motif is highly conserved across a broad range of retroviral envelope proteins. It is thought to participate in the formation of a labile disulfide bond possibly with the CX6CC motif present in the transmembrane protein. Isomerization of the intersubunit disulfide bond to an SU intrachain disulfide bond is thought to occur upon receptor recognition in order to allow membrane fusion. In terms of processing, the transmembrane protein is palmitoylated. Post-translationally, the R-peptide is palmitoylated.

Its subcellular location is the virion membrane. The protein localises to the host cell membrane. The surface protein (SU) attaches the virus to the host cell by binding to its receptor. This interaction activates a thiol in a CXXC motif of the C-terminal domain, where the other Cys residue participates in the formation of the intersubunit disulfide. The activated thiol will attack the disulfide and cause its isomerization into a disulfide isomer within the motif. This leads to SU displacement and TM refolding, and is thought to activate its fusogenic potential by unmasking its fusion peptide. Fusion occurs at the host cell plasma membrane. In terms of biological role, the transmembrane protein (TM) acts as a class I viral fusion protein. Under the current model, the protein has at least 3 conformational states: pre-fusion native state, pre-hairpin intermediate state, and post-fusion hairpin state. During viral and target cell membrane fusion, the coiled coil regions (heptad repeats) assume a trimer-of-hairpins structure, positioning the fusion peptide in close proximity to the C-terminal region of the ectodomain. The formation of this structure appears to drive apposition and subsequent fusion of viral and target cell membranes. Membranes fusion leads to delivery of the nucleocapsid into the cytoplasm. The chain is Envelope glycoprotein (env) from Xenotropic MuLV-related virus (isolate VP42) (XMRV).